The primary structure comprises 168 residues: RNA pyrophosphohydrolase (168 aa).

Residues 8-159 (PYRTCVGVML…KRPVYERVVK (152 aa)) form the Nudix hydrolase domain. A Nudix box motif is present at residues 47-68 (GGVDPGEDTWKAAKRELYEETS).

This sequence belongs to the Nudix hydrolase family. RppH subfamily. It depends on a divalent metal cation as a cofactor.

Accelerates the degradation of transcripts by removing pyrophosphate from the 5'-end of triphosphorylated RNA, leading to a more labile monophosphorylated state that can stimulate subsequent ribonuclease cleavage. The protein is RNA pyrophosphohydrolase of Rhodopseudomonas palustris (strain ATCC BAA-98 / CGA009).